Consider the following 646-residue polypeptide: Rho guanine nucleotide exchange factor 7 (646 aa).

The region spanning 6–65 is the SH3 domain; that stretch reads NSQLVVRAKFNFQQTNEDELSFSKGDVIHVTRVEEGGWWEGTHNGRTGWFPSNYVREIKP. Ser-7, Ser-71, and Ser-79 each carry phosphoserine. A DH domain is found at 93–273; sequence YYNVVLQNIL…KNLSAQCQEV (181 aa). Residues 295 to 400 enclose the PH domain; sequence DIKTLGSVTY…WVEHLQRQTK (106 aa). Position 340 is a phosphoserine (Ser-340). Disordered stretches follow at residues 402-464 and 500-520; these read TSVS…GPLE and KTMK…DEEF. Residues 415–428 are compositionally biased toward polar residues; that stretch reads PSHTLPSHPLTPSS. Residues 500-512 show a composition bias toward basic residues; sequence KTMKKLLPKRKPE. 2 positions are modified to phosphoserine: Ser-516 and Ser-560.

As to quaternary structure, interacts with SCRIB; interaction is direct and may play a role in regulation of apoptosis. Interacts with PAK kinases through the SH3 domain. Interacts with GIT1 and probably TGFB1I1. Interacts with ITCH and PARVB. Interacts with FRMPD4 (via N-terminus). Interacts with CaMK1. Interacts with PTK2/FAK1 and RAC1. Interacts with BIN2. Interacts with YWHAZ. Interacts (via PH domain) with NOX1 (via FAD-binding FR-type domain). Post-translationally, phosphorylated on Ser-516 by CaMK1; enhancement of GEF activity and downstream activation of RAC1. Phosphorylated by PTK2/FAK1; this promotes interaction with RAC1.

The protein localises to the cell junction. The protein resides in the focal adhesion. It localises to the cell projection. It is found in the ruffle. Its subcellular location is the cytoplasm. The protein localises to the cell cortex. The protein resides in the lamellipodium. Functionally, acts as a RAC1 guanine nucleotide exchange factor (GEF) and can induce membrane ruffling. Functions in cell migration, attachment and cell spreading. Promotes targeting of RAC1 to focal adhesions. May function as a positive regulator of apoptosis. Downstream of NMDA receptors and CaMKK-CaMK1 signaling cascade, promotes the formation of spines and synapses in hippocampal neurons. This chain is Rho guanine nucleotide exchange factor 7 (Arhgef7), found in Rattus norvegicus (Rat).